Consider the following 170-residue polypeptide: Arginine repressor (170 aa).

It belongs to the ArgR family.

It is found in the cytoplasm. The protein operates within amino-acid biosynthesis; L-arginine biosynthesis [regulation]. In terms of biological role, regulates arginine biosynthesis genes. The chain is Arginine repressor from Bifidobacterium longum (strain NCC 2705).